The following is a 338-amino-acid chain: DNA fragmentation factor subunit beta (338 aa).

The CIDE-N domain maps to 4–80 (KPKSVKLRAL…LLTLGQAWQG (77 aa)).

As to quaternary structure, heterodimer of DFFA and DFFB. Interacts with H1-1.

It localises to the cytoplasm. Its subcellular location is the nucleus. Its activity is regulated as follows. Inhibited by DFFA (DFF45). Its function is as follows. Nuclease that induces DNA fragmentation and chromatin condensation during apoptosis. Degrades naked DNA and induces apoptotic morphology. The polypeptide is DNA fragmentation factor subunit beta (DFFB) (Homo sapiens (Human)).